The following is a 269-amino-acid chain: Bis(5'-nucleosyl)-tetraphosphatase, symmetrical (269 aa).

This sequence belongs to the Ap4A hydrolase family.

The catalysed reaction is P(1),P(4)-bis(5'-adenosyl) tetraphosphate + H2O = 2 ADP + 2 H(+). In terms of biological role, hydrolyzes diadenosine 5',5'''-P1,P4-tetraphosphate to yield ADP. This Vibrio vulnificus (strain YJ016) protein is Bis(5'-nucleosyl)-tetraphosphatase, symmetrical.